Here is a 412-residue protein sequence, read N- to C-terminus: Heat stress transcription factor A-3 (412 aa).

A DNA-binding region spans residues 53-147 (IPPFLSKTFD…LLKNIHRRRS (95 aa)). Residues 144–170 (RRRSPQSNQTCCSSTSQSQGSPTEVGG) form a disordered region. Positions 148-166 (PQSNQTCCSSTSQSQGSPT) are enriched in low complexity. The hydrophobic repeat HR-A/B stretch occupies residues 159 to 225 (SQSQGSPTEV…QLLSFLAKLF (67 aa)). Residues 166 to 224 (TEVGGEIEKLRKERRALMEEMVELQQQSRGTARHVDTVNQRLKAAEQRQKQLLSFLAKL) adopt a coiled-coil conformation. The short motif at 238–254 (KGKEKGGALGLEKARKK) is the Bipartite nuclear localization signal element. The short motif at 277–286 (DDWERLLMYD) is the AHA1 element. The AHA2 motif lies at 381–390 (DVCWEQFAAG).

This sequence belongs to the HSF family. Class A subfamily. As to quaternary structure, homotrimer. In terms of processing, exhibits temperature-dependent phosphorylation.

The protein resides in the nucleus. Transcriptional activator that specifically binds DNA sequence 5'-AGAAnnTTCT-3' known as heat shock promoter elements (HSE). Involved in heat stress response. Activated by DREB2A under heat stress. This is Heat stress transcription factor A-3 (HSFA3) from Arabidopsis thaliana (Mouse-ear cress).